The sequence spans 134 residues: Profilin-3 (134 aa).

An intrachain disulfide couples cysteine 13 to cysteine 118. The Involved in PIP2 interaction signature appears at 84-100; the sequence is AVIRGKKGSGGITIKKT. Threonine 114 is subject to Phosphothreonine.

Belongs to the profilin family. In terms of assembly, occurs in many kinds of cells as a complex with monomeric actin in a 1:1 ratio. Phosphorylated by MAP kinases.

It localises to the cytoplasm. The protein resides in the cytoskeleton. Its function is as follows. Binds to actin and affects the structure of the cytoskeleton. At high concentrations, profilin prevents the polymerization of actin, whereas it enhances it at low concentrations. This is Profilin-3 from Olea europaea (Common olive).